The primary structure comprises 150 residues: Transcriptional regulator MraZ (150 aa).

SpoVT-AbrB domains follow at residues 5–51 (VANL…PQPE) and 80–123 (ATEC…DEDT).

Belongs to the MraZ family. As to quaternary structure, forms oligomers.

It is found in the cytoplasm. The protein resides in the nucleoid. This Thioalkalivibrio sulfidiphilus (strain HL-EbGR7) protein is Transcriptional regulator MraZ.